The following is a 3546-amino-acid chain: Ubiquitin carboxyl-terminal hydrolase 34 (3546 aa).

Residues serine 352, serine 486, serine 487, and serine 490 each carry the phosphoserine modification. Disordered stretches follow at residues 502 to 535, 550 to 679, and 1459 to 1478; these read KEEE…SGGS, VQQR…VFNT, and TGSY…DQVE. Residues 511–524 show a composition bias toward low complexity; that stretch reads APSPWSPAASPQSS. Polar residues-rich tracts occupy residues 525-534 and 560-570; these read DNSDTHQSGG and SMQGSSDETAN. Residues 571–590 show a composition bias toward low complexity; that stretch reads SGEDGSSGPGSSSGHSDGSS. The segment covering 591 to 609 has biased composition (polar residues); sequence NEVNSSHASQSAGSPGSEV. A compositionally biased stretch (acidic residues) spans 610-627; the sequence is QSEDIADIEALKEEDEDD. Serine 649 carries the post-translational modification Phosphoserine. A compositionally biased stretch (polar residues) spans 659–671; the sequence is QGMSERNGTSSGT. Acidic residues predominate over residues 1467 to 1477; it reads PDSDDSSEDQV. Residue serine 1469 is modified to Phosphoserine. The USP domain occupies 1894 to 2239; the sequence is VGLTNLGATC…SAYMLFYKRM (346 aa). The active-site Nucleophile is the cysteine 1903. The active-site Proton acceptor is the histidine 2164. Residue serine 2488 is modified to Phosphoserine. Residues 3331-3443 form a disordered region; that stretch reads NSLQEQEAKE…HAEEQSNNGR (113 aa). Residues 3336–3347 are compositionally biased toward basic and acidic residues; it reads QEAKERKTKDDE. Serine 3358 and serine 3359 each carry phosphoserine. Threonine 3381 is modified (phosphothreonine). Serine 3386 and serine 3406 each carry phosphoserine. The segment covering 3421–3432 has biased composition (polar residues); that stretch reads SSFSEDMSNIRS. Residues 3433 to 3443 are compositionally biased toward basic and acidic residues; that stretch reads QHAEEQSNNGR. Residue serine 3503 is modified to Phosphoserine.

It belongs to the peptidase C19 family. As to quaternary structure, interacts with AXIN1 and AXIN2. As to expression, expressed in brain at low level.

The catalysed reaction is Thiol-dependent hydrolysis of ester, thioester, amide, peptide and isopeptide bonds formed by the C-terminal Gly of ubiquitin (a 76-residue protein attached to proteins as an intracellular targeting signal).. Ubiquitin hydrolase that can remove conjugated ubiquitin from AXIN1 and AXIN2, thereby acting as a regulator of Wnt signaling pathway. Acts as an activator of the Wnt signaling pathway downstream of the beta-catenin destruction complex by deubiquitinating and stabilizing AXIN1 and AXIN2, leading to promote nuclear accumulation of AXIN1 and AXIN2 and positively regulate beta-catenin (CTNBB1)-mediated transcription. Recognizes and hydrolyzes the peptide bond at the C-terminal Gly of ubiquitin. Involved in the processing of poly-ubiquitin precursors as well as that of ubiquitinated proteins. The polypeptide is Ubiquitin carboxyl-terminal hydrolase 34 (USP34) (Homo sapiens (Human)).